Reading from the N-terminus, the 230-residue chain is MAELRYRAGKIKNPRVHKIGVIALGSHLENHGPALPIDTDAKIGAHIAFQASLESGAKFLGIVFPAYELDEIDHGVHVSLDELKANVISTLNSAKKYLDIEKVVIVNSHGGNIPLMTELYDIEDKTDLTIIFNNKIISTEGPHGGSGELSMAKVLGIINEAEIENQTDLSKYEEVGLYGFKQARENDPNIEEGARDVEENGVYVDEVYGKQLFDLAINSVVFDIEKLLDF.

Glu29, His31, Asp40, and His109 together coordinate Fe cation.

The protein belongs to the creatininase superfamily. FAPy deformylase family. As to quaternary structure, homodimer. Fe(2+) is required as a cofactor. Requires Zn(2+) as cofactor.

It carries out the reaction 2-amino-5-formylamino-6-(5-phospho-D-ribosylamino)pyrimidin-4(3H)-one + H2O = 2,5-diamino-6-(1-D-ribosylamino)pyrimidin-4(3H)-one 5'-phosphate + formate + H(+). Its pathway is cofactor biosynthesis; coenzyme F420 biosynthesis. It participates in cofactor biosynthesis; riboflavin biosynthesis. Catalyzes the hydrolysis of the formamide of 2-amino-5-formylamino-6-ribosylamino-4(3H)-pyrimidinone 5'-monophosphate (FAPy) to form 2,5-diamino-6-ribosylamino-4(3H)-pyrimidinone 5'-phosphate (APy). This is 2-amino-5-formylamino-6-ribosylaminopyrimidin-4(3H)-one 5'-monophosphate deformylase from Methanobrevibacter smithii (strain ATCC 35061 / DSM 861 / OCM 144 / PS).